Here is a 99-residue protein sequence, read N- to C-terminus: MRATVGLVEAIGIRELRQHASRYLARVEAGEELGVTNKGRLVARLIPVQAAERSREALIESGVLIPARRPQNLLDVTAEPARGRKRTLSDVLNEMRDEQ.

It belongs to the phD/YefM antitoxin family.

In terms of biological role, antitoxin component of a type II toxin-antitoxin (TA) system. In Mycobacterium tuberculosis (strain CDC 1551 / Oshkosh), this protein is Antitoxin VapB47 (vapB47).